Consider the following 1510-residue polypeptide: Cysteine-tryptophan domain-containing zinc finger protein 5 (1510 aa).

The span at 174-196 (YCQRTSSENDSNHSQQLLNSGPE) shows a compositional bias: polar residues. Disordered stretches follow at residues 174–198 (YCQR…PEQK), 449–497 (SSLD…CAKD), 555–574 (KPNY…YVLD), and 582–616 (LHTE…DHKI). Positions 454-465 (GFSHKTKSDKCN) are enriched in basic and acidic residues. The span at 467–476 (QPVTTSSQLQ) shows a compositional bias: polar residues. 2 stretches are compositionally biased toward basic and acidic residues: residues 479 to 497 (PAKK…CAKD) and 556 to 574 (PNYD…YVLD). The segment at 645–698 (SEPVDQWVCCDKCETWRLLPYGMNSDTLPKKWRCSMQSWLPGMNNCKLSEGETT) adopts a CW-type zinc-finger fold. Positions 654, 657, 678, and 690 each coordinate Zn(2+). Positions 768-780 (KQKRIESSDKGEK) are enriched in basic and acidic residues. 3 disordered regions span residues 768 to 893 (KQKR…RDLF), 1003 to 1050 (STAA…LDRH), and 1149 to 1194 (LPIH…VRPD). Over residues 781–790 (STVTISSGQT) the composition is skewed to polar residues. Over residues 874–893 (NSDRGARASDAGKSDPRDLF) the composition is skewed to basic and acidic residues. Low complexity predominate over residues 1003-1016 (STAATSSSSKVSSS). Polar residues-rich tracts occupy residues 1026–1040 (TRTS…SPLR) and 1162–1182 (PDQN…QAKL).

In terms of tissue distribution, highly expressed in young panicles. Expressed at low levels in leaf sheaths, nodes, internodes and axillary buds.

It localises to the nucleus. Functionally, binds to histones H3K4me1, H3K4me2 and H3K4me3 in GST pull-down assay. May facilitate the recruitment of effectors to mediate gene expression. The chain is Cysteine-tryptophan domain-containing zinc finger protein 5 from Oryza sativa subsp. japonica (Rice).